A 326-amino-acid polypeptide reads, in one-letter code: Tetraacyldisaccharide 4'-kinase (326 aa).

Position 54 to 61 (54 to 61 (SVGGTGKT)) interacts with ATP.

The protein belongs to the LpxK family.

It carries out the reaction a lipid A disaccharide + ATP = a lipid IVA + ADP + H(+). It participates in glycolipid biosynthesis; lipid IV(A) biosynthesis; lipid IV(A) from (3R)-3-hydroxytetradecanoyl-[acyl-carrier-protein] and UDP-N-acetyl-alpha-D-glucosamine: step 6/6. In terms of biological role, transfers the gamma-phosphate of ATP to the 4'-position of a tetraacyldisaccharide 1-phosphate intermediate (termed DS-1-P) to form tetraacyldisaccharide 1,4'-bis-phosphate (lipid IVA). The sequence is that of Tetraacyldisaccharide 4'-kinase from Rickettsia canadensis (strain McKiel).